The primary structure comprises 64 residues: Translational regulator CsrA (64 aa).

This sequence belongs to the CsrA/RsmA family. In terms of assembly, homodimer; the beta-strands of each monomer intercalate to form a hydrophobic core, while the alpha-helices form wings that extend away from the core.

It is found in the cytoplasm. Functionally, a key translational regulator that binds mRNA to regulate translation initiation and/or mRNA stability. Mediates global changes in gene expression, shifting from rapid growth to stress survival by linking envelope stress, the stringent response and the catabolite repression systems. Usually binds in the 5'-UTR; binding at or near the Shine-Dalgarno sequence prevents ribosome-binding, repressing translation, binding elsewhere in the 5'-UTR can activate translation and/or stabilize the mRNA. Its function is antagonized by small RNA(s). This is Translational regulator CsrA from Actinobacillus pleuropneumoniae serotype 5b (strain L20).